The primary structure comprises 528 residues: DEAD-box ATP-dependent RNA helicase 6 (528 aa).

Composition is skewed to low complexity over residues 1 to 15 and 65 to 80; these read MNNNNNNRGRFPPGI and QQYVQRGYPQQIQQQQ. The disordered stretch occupies residues 1–80; sequence MNNNNNNRGR…GYPQQIQQQQ (80 aa). The Q motif motif lies at 154–182; sequence NEFEDYFLKRDLLRGIYEKGFEKPSPIQE. Residues 185 to 355 form the Helicase ATP-binding domain; it reads IPIALTGSDI…DRYLKKPYII (171 aa). 198–205 is an ATP binding site; the sequence is AKNGTGKT. T260 bears the Phosphothreonine mark. Residues 303–306 carry the DEAD box motif; it reads DEAD. Residues 365–525 form the Helicase C-terminal domain; it reads GVTQYYAFVE…PIPSLIDKAI (161 aa).

This sequence belongs to the DEAD box helicase family. DDX6/DHH1 subfamily.

It is found in the cytoplasm. Its subcellular location is the P-body. The enzyme catalyses ATP + H2O = ADP + phosphate + H(+). ATP-dependent RNA helicase involved in mRNA turnover, and more specifically in mRNA decapping. The polypeptide is DEAD-box ATP-dependent RNA helicase 6 (RH6) (Arabidopsis thaliana (Mouse-ear cress)).